The primary structure comprises 217 residues: GTPase IMAP family member GIMD1 (217 aa).

Residues 6 to 217 enclose the AIG1-type G domain; sequence KMIINLAVFG…ENHFQVLSLA (212 aa). Residues 15–23, serine 36, and 148–150 each bind GTP; these read GRTQSGKSS and HAE.

Belongs to the TRAFAC class TrmE-Era-EngA-EngB-Septin-like GTPase superfamily. AIG1/Toc34/Toc159-like paraseptin GTPase family. IAN subfamily.

In Mus musculus (Mouse), this protein is GTPase IMAP family member GIMD1 (Gimd1).